Reading from the N-terminus, the 890-residue chain is DNA mismatch repair protein MutS (890 aa).

Glycine 645 to serine 652 contributes to the ATP binding site.

It belongs to the DNA mismatch repair MutS family.

This protein is involved in the repair of mismatches in DNA. It is possible that it carries out the mismatch recognition step. This protein has a weak ATPase activity. This is DNA mismatch repair protein MutS from Rickettsia conorii (strain ATCC VR-613 / Malish 7).